The primary structure comprises 391 residues: Acetylgalactosaminyl-O-glycosyl-glycoprotein beta-1,3-N-acetylglucosaminyltransferase (391 aa).

The Cytoplasmic portion of the chain corresponds to 1-11 (MALPSSRRFKS). The helical; Signal-anchor for type II membrane protein transmembrane segment at 12–32 (PTTLAFFLVGVTLVVLNQWFL) threads the bilayer. The Lumenal portion of the chain corresponds to 33–391 (QEHRQEKAKG…TAGEQNPDAH (359 aa)). N-linked (GlcNAc...) asparagine glycosylation is found at Asn-68 and Asn-191.

It belongs to the glycosyltransferase 31 family.

It localises to the golgi apparatus membrane. It catalyses the reaction a 3-O-[N-acetyl-alpha-D-galactosaminyl]-L-threonyl-[protein] + UDP-N-acetyl-alpha-D-glucosamine = a 3-O-[N-acetyl-beta-D-glucosaminyl-(1-&gt;3)-N-acetyl-alpha-D-galactosaminyl]-L-threonyl-[protein] + UDP + H(+). It carries out the reaction a 3-O-[N-acetyl-alpha-D-galactosaminyl]-L-seryl-[protein] + UDP-N-acetyl-alpha-D-glucosamine = 3-O-[N-acetyl-beta-D-glucosaminyl-(1-&gt;3)-N-acetyl-alpha-D-galactosaminyl]-L-seryl-[protein] + UDP + H(+). It participates in protein modification; protein glycosylation. Functionally, beta-1,3-N-acetylglucosaminyltransferase that synthesizes the core 3 structure of the O-glycan, an important precursor in the biosynthesis of mucin-type glycoproteins. Plays an important role in the synthesis of mucin-type O-glycans in digestive organs. This chain is Acetylgalactosaminyl-O-glycosyl-glycoprotein beta-1,3-N-acetylglucosaminyltransferase (B3gnt6), found in Mus musculus (Mouse).